Reading from the N-terminus, the 121-residue chain is Large ribosomal subunit protein bL19 (121 aa).

The protein belongs to the bacterial ribosomal protein bL19 family.

Functionally, this protein is located at the 30S-50S ribosomal subunit interface and may play a role in the structure and function of the aminoacyl-tRNA binding site. The sequence is that of Large ribosomal subunit protein bL19 from Chlamydia trachomatis serovar L2 (strain ATCC VR-902B / DSM 19102 / 434/Bu).